Consider the following 231-residue polypeptide: Ureidoacrylate amidohydrolase RutB (231 aa).

The active-site Proton acceptor is Asp25. Lys134 is a catalytic residue. Catalysis depends on Cys167, which acts as the Nucleophile.

The protein belongs to the isochorismatase family. RutB subfamily.

It catalyses the reaction (Z)-3-ureidoacrylate + H2O + H(+) = (Z)-3-aminoacrylate + NH4(+) + CO2. It carries out the reaction (Z)-3-ureidoacrylate + H2O = (Z)-3-aminoacrylate + carbamate + H(+). The enzyme catalyses (Z)-2-methylureidoacrylate + H2O + H(+) = (Z)-2-methylaminoacrylate + NH4(+) + CO2. In terms of biological role, hydrolyzes ureidoacrylate to form aminoacrylate and carbamate. The carbamate hydrolyzes spontaneously, thereby releasing one of the nitrogen atoms of the pyrimidine ring as ammonia and one of its carbon atoms as CO2. This chain is Ureidoacrylate amidohydrolase RutB, found in Escherichia coli O139:H28 (strain E24377A / ETEC).